The following is a 524-amino-acid chain: Cytochrome P450 1A1 (524 aa).

Residues Leu33 to Pro44 are mitochondrial targeting signal. The O-linked (GlcNAc) serine glycan is linked to Ser71. Residue Phe228 coordinates substrate. Position 461 (Cys461) interacts with heme.

Belongs to the cytochrome P450 family. As to quaternary structure, interacts with cytosolic chaperones HSP70 and HSP90; this interaction is required for initial targeting to mitochondria. Interacts (via mitochondrial targeting signal) with TOMM40 (via N-terminus); this interaction is required for translocation across the mitochondrial outer membrane. Requires heme as cofactor.

It localises to the endoplasmic reticulum membrane. Its subcellular location is the mitochondrion inner membrane. The protein resides in the microsome membrane. It is found in the cytoplasm. The enzyme catalyses an organic molecule + reduced [NADPH--hemoprotein reductase] + O2 = an alcohol + oxidized [NADPH--hemoprotein reductase] + H2O + H(+). The catalysed reaction is estrone + reduced [NADPH--hemoprotein reductase] + O2 = 2-hydroxyestrone + oxidized [NADPH--hemoprotein reductase] + H2O + H(+). It catalyses the reaction estrone + reduced [NADPH--hemoprotein reductase] + O2 = 4-hydroxyestrone + oxidized [NADPH--hemoprotein reductase] + H2O + H(+). It carries out the reaction estrone + reduced [NADPH--hemoprotein reductase] + O2 = 6alpha-hydroxyestrone + oxidized [NADPH--hemoprotein reductase] + H2O + H(+). The enzyme catalyses estrone + reduced [NADPH--hemoprotein reductase] + O2 = 15alpha-hydroxyestrone + oxidized [NADPH--hemoprotein reductase] + H2O + H(+). The catalysed reaction is estrone + reduced [NADPH--hemoprotein reductase] + O2 = 16alpha-hydroxyestrone + oxidized [NADPH--hemoprotein reductase] + H2O + H(+). It catalyses the reaction 17beta-estradiol + reduced [NADPH--hemoprotein reductase] + O2 = 2-hydroxy-17beta-estradiol + oxidized [NADPH--hemoprotein reductase] + H2O + H(+). It carries out the reaction 17beta-estradiol + reduced [NADPH--hemoprotein reductase] + O2 = 4-hydroxy-17beta-estradiol + oxidized [NADPH--hemoprotein reductase] + H2O + H(+). The enzyme catalyses 17beta-estradiol + reduced [NADPH--hemoprotein reductase] + O2 = 6alpha-hydroxy-17beta-estradiol + oxidized [NADPH--hemoprotein reductase] + H2O + H(+). The catalysed reaction is 17beta-estradiol + reduced [NADPH--hemoprotein reductase] + O2 = 7alpha-hydroxy-17beta-estradiol + oxidized [NADPH--hemoprotein reductase] + H2O + H(+). It catalyses the reaction 17beta-estradiol + reduced [NADPH--hemoprotein reductase] + O2 = 15alpha-hydroxy-17beta-estradiol + oxidized [NADPH--hemoprotein reductase] + H2O + H(+). It carries out the reaction (5Z,8Z,11Z)-eicosatrienoate + reduced [NADPH--hemoprotein reductase] + O2 = 19-hydroxy-(5Z,8Z,11Z)-eicosatrienoate + oxidized [NADPH--hemoprotein reductase] + H2O + H(+). The enzyme catalyses (5Z,8Z,11Z,14Z)-eicosatetraenoate + reduced [NADPH--hemoprotein reductase] + O2 = 16-hydroxy-(5Z,8Z,11Z,14Z)-eicosatetraenoate + oxidized [NADPH--hemoprotein reductase] + H2O + H(+). The catalysed reaction is (5Z,8Z,11Z,14Z)-eicosatetraenoate + reduced [NADPH--hemoprotein reductase] + O2 = 17-hydroxy-(5Z,8Z,11Z,14Z)-eicosatetraenoate + oxidized [NADPH--hemoprotein reductase] + H2O + H(+). It catalyses the reaction (5Z,8Z,11Z,14Z)-eicosatetraenoate + reduced [NADPH--hemoprotein reductase] + O2 = 18-hydroxy-(5Z,8Z,11Z,14Z)-eicosatetraenoate + oxidized [NADPH--hemoprotein reductase] + H2O + H(+). It carries out the reaction (5Z,8Z,11Z,14Z)-eicosatetraenoate + reduced [NADPH--hemoprotein reductase] + O2 = 19-hydroxy-(5Z,8Z,11Z,14Z)-eicosatetraenoate + oxidized [NADPH--hemoprotein reductase] + H2O + H(+). The enzyme catalyses (5Z,8Z,11Z,14Z,17Z)-eicosapentaenoate + reduced [NADPH--hemoprotein reductase] + O2 = 19-hydroxy-(5Z,8Z,11Z,14Z,17Z)-eicosapentaenoate + oxidized [NADPH--hemoprotein reductase] + H2O + H(+). The catalysed reaction is (5Z,8Z,11Z,14Z)-eicosatetraenoate + reduced [NADPH--hemoprotein reductase] + O2 = (8R,9S)-epoxy-(5Z,11Z,14Z)-eicosatrienoate + oxidized [NADPH--hemoprotein reductase] + H2O + H(+). It catalyses the reaction (5Z,8Z,11Z,14Z)-eicosatetraenoate + reduced [NADPH--hemoprotein reductase] + O2 = (11R,12S)-epoxy-(5Z,8Z,14Z)-eicosatrienoate + oxidized [NADPH--hemoprotein reductase] + H2O + H(+). It carries out the reaction (5Z,8Z,11Z,14Z)-eicosatetraenoate + reduced [NADPH--hemoprotein reductase] + O2 = (14S,15R)-epoxy-(5Z,8Z,11Z)-eicosatrienoate + oxidized [NADPH--hemoprotein reductase] + H2O + H(+). The enzyme catalyses (5Z,8Z,11Z,14Z)-eicosatetraenoate + reduced [NADPH--hemoprotein reductase] + O2 = (14R,15S)-epoxy-(5Z,8Z,11Z)-eicosatrienoate + oxidized [NADPH--hemoprotein reductase] + H2O + H(+). The catalysed reaction is (5Z,8Z,11Z,14Z,17Z)-eicosapentaenoate + reduced [NADPH--hemoprotein reductase] + O2 = (17R,18S)-epoxy-(5Z,8Z,11Z,14Z)-eicosatetraenoate + oxidized [NADPH--hemoprotein reductase] + H2O + H(+). It catalyses the reaction (4Z,7Z,10Z,13Z,16Z,19Z)-docosahexaenoate + reduced [NADPH--hemoprotein reductase] + O2 = (19S,20R)-epoxy-(4Z,7Z,10Z,13Z,16Z)-docosapentaenoate + oxidized [NADPH--hemoprotein reductase] + H2O + H(+). It carries out the reaction (4Z,7Z,10Z,13Z,16Z,19Z)-docosahexaenoate + reduced [NADPH--hemoprotein reductase] + O2 = (19R,20S)-epoxy-(4Z,7Z,10Z,13Z,16Z)-docosapentaenoate + oxidized [NADPH--hemoprotein reductase] + H2O + H(+). The enzyme catalyses all-trans-retinol + reduced [NADPH--hemoprotein reductase] + O2 = all-trans-retinal + oxidized [NADPH--hemoprotein reductase] + 2 H2O + H(+). The catalysed reaction is all-trans-retinal + reduced [NADPH--hemoprotein reductase] + O2 = all-trans-retinoate + oxidized [NADPH--hemoprotein reductase] + H2O + 2 H(+). It catalyses the reaction (13S)-hydroperoxy-(9Z,11E)-octadecadienoate = 13-oxo-(9Z,11E)-octadecadienoate + H2O. It carries out the reaction (12S)-hydroperoxy-(5Z,8Z,10E,14Z)-eicosatetraenoate = 12-oxo-(5Z,8Z,10E,14Z)-eicosatetraenoate + H2O. The enzyme catalyses (15S)-hydroperoxy-(5Z,8Z,11Z,13E)-eicosatetraenoate = 15-oxo-(5Z,8Z,11Z,13E)-eicosatetraenoate + H2O. The catalysed reaction is (5S)-hydroperoxy-(6E,8Z,11Z,14Z)-eicosatetraenoate = 5-oxo-(6E,8Z,11Z,14Z)-eicosatetraenoate + H2O. Its pathway is steroid hormone biosynthesis. It functions in the pathway lipid metabolism; fatty acid metabolism. The protein operates within cofactor metabolism; retinol metabolism. A cytochrome P450 monooxygenase involved in the metabolism of various endogenous substrates, including fatty acids, steroid hormones and vitamins. Mechanistically, uses molecular oxygen inserting one oxygen atom into a substrate, and reducing the second into a water molecule, with two electrons provided by NADPH via cytochrome P450 reductase (CPR; NADPH-ferrihemoprotein reductase). Catalyzes the hydroxylation of carbon-hydrogen bonds. Exhibits high catalytic activity for the formation of hydroxyestrogens from estrone (E1) and 17beta-estradiol (E2), namely 2-hydroxy E1 and E2, as well as D-ring hydroxylated E1 and E2 at the C15alpha and C16alpha positions. Displays different regioselectivities for polyunsaturated fatty acids (PUFA) hydroxylation. Catalyzes the epoxidation of double bonds of certain PUFA. Converts arachidonic acid toward epoxyeicosatrienoic acid (EET) regioisomers, 8,9-, 11,12-, and 14,15-EET, that function as lipid mediators in the vascular system. Displays an absolute stereoselectivity in the epoxidation of eicosapentaenoic acid (EPA) producing the 17(R),18(S) enantiomer. May play an important role in all-trans retinoic acid biosynthesis in extrahepatic tissues. Catalyzes two successive oxidative transformation of all-trans retinol to all-trans retinal and then to the active form all-trans retinoic acid. May also participate in eicosanoids metabolism by converting hydroperoxide species into oxo metabolites (lipoxygenase-like reaction, NADPH-independent). The chain is Cytochrome P450 1A1 (CYP1A1) from Mesocricetus auratus (Golden hamster).